Consider the following 319-residue polypeptide: Methyltransferase tpcM (319 aa).

The methyltransferase domain stretch occupies residues 63–155; that stretch reads DVGAGIGPYA…QLRPGGTFAC (93 aa).

It belongs to the methyltransferase superfamily. Specifically expressed in conidia.

It participates in secondary metabolite biosynthesis. Its function is as follows. Methyltransferase; part of the gene cluster that mediates the biosynthesis of trypacidin, a mycotoxin with antiprotozoal activity and that plays a role in the infection process. The pathway begins with the synthesis of atrochrysone thioester by the polyketide synthase (PKS) tpcC. The atrochrysone carboxyl ACP thioesterase tpcB then breaks the thioester bond and releases the atrochrysone carboxylic acid from tpcC. The decarboxylase tpcK converts atrochrysone carboxylic acid to atrochrysone which is further reduced into emodin anthrone. The next step is performed by the emodin anthrone oxygenase tpcL that catalyzes the oxidation of emodinanthrone to emodin. Emodin O-methyltransferase encoded by tpcA catalyzes methylation of the 8-hydroxy group of emodin to form questin. Ring cleavage of questin by questin oxidase tpcI leads to desmethylsulochrin via several intermediates including questin epoxide. Another methylation step catalyzed by tpcM leads to the formation of sulochrin which is further converted to monomethylsulfochrin by tpcH. Finally, the tpcJ catalyzes the conversion of monomethylsulfochrin to trypacidin. Trypacidin is toxic for human pulmonary and bronchial epithelial cells by initiating the intracellular formation of nitric oxide (NO) and hydrogen peroxide (H(2)O(2)), thus triggering host necrotic cell death. The trypacidin pathway is also able to produce endocrocin via a distinct route from the endocrocin Enc pathway. This is Methyltransferase tpcM from Aspergillus fumigatus (strain ATCC MYA-4609 / CBS 101355 / FGSC A1100 / Af293) (Neosartorya fumigata).